A 494-amino-acid polypeptide reads, in one-letter code: Probable cytochrome P450 515A1 (494 aa).

Residues 1 to 21 (MILGIILGLFIYIYLINIKFF) traverse the membrane as a helical segment. Cysteine 440 serves as a coordination point for heme.

It belongs to the cytochrome P450 family. The cofactor is heme.

The protein localises to the membrane. This is Probable cytochrome P450 515A1 (cyp515A1) from Dictyostelium discoideum (Social amoeba).